The following is a 172-amino-acid chain: 3-hydroxydecanoyl-[acyl-carrier-protein] dehydratase (172 aa).

H71 is an active-site residue.

Belongs to the thioester dehydratase family. FabA subfamily. As to quaternary structure, homodimer.

The protein localises to the cytoplasm. The enzyme catalyses a (3R)-hydroxyacyl-[ACP] = a (2E)-enoyl-[ACP] + H2O. It carries out the reaction (3R)-hydroxydecanoyl-[ACP] = (2E)-decenoyl-[ACP] + H2O. It catalyses the reaction (2E)-decenoyl-[ACP] = (3Z)-decenoyl-[ACP]. The protein operates within lipid metabolism; fatty acid biosynthesis. In terms of biological role, necessary for the introduction of cis unsaturation into fatty acids. Catalyzes the dehydration of (3R)-3-hydroxydecanoyl-ACP to E-(2)-decenoyl-ACP and then its isomerization to Z-(3)-decenoyl-ACP. Can catalyze the dehydratase reaction for beta-hydroxyacyl-ACPs with saturated chain lengths up to 16:0, being most active on intermediate chain length. This chain is 3-hydroxydecanoyl-[acyl-carrier-protein] dehydratase, found in Vibrio cholerae serotype O1 (strain ATCC 39541 / Classical Ogawa 395 / O395).